We begin with the raw amino-acid sequence, 175 residues long: ADP-ribosylation factor 6 (175 aa).

A lipid anchor (N-myristoyl glycine) is attached at glycine 2. Lysine 3 carries the N6-myristoyl lysine lipid modification. Residues 23–28, 41–44, 63–67, 122–125, and 155–156 each bind GTP; these read AAGKTT, TIPT, DVGGQ, NKQD, and CA.

It belongs to the small GTPase superfamily. Arf family.

It localises to the cytoplasm. The protein localises to the cytosol. Its subcellular location is the cell membrane. The protein resides in the endosome membrane. It is found in the recycling endosome membrane. It localises to the cell projection. The protein localises to the filopodium membrane. Its subcellular location is the ruffle. The protein resides in the cleavage furrow. It is found in the midbody. It localises to the midbody ring. The protein localises to the golgi apparatus. It catalyses the reaction GTP + H2O = GDP + phosphate + H(+). Functionally, GTP-binding protein involved in protein trafficking; regulates endocytic recycling and cytoskeleton remodeling. May modulate vesicle budding and uncoating within the Golgi apparatus. May contribute to the regulation of dendritic branching, filopodia extension and dendritic spine development. The chain is ADP-ribosylation factor 6 (arf6) from Xenopus laevis (African clawed frog).